Consider the following 98-residue polypeptide: MPPIYMNIILAFTLSLMGMLVYRSHLMSSLLCLEGMMLSLFILGTTMALNMHFTLMTMLPIVLLVFAACEAAVGLSLLVMVSNTYGLDYVQNLNLLQC.

A run of 3 helical transmembrane segments spans residues 1-21, 29-49, and 61-81; these read MPPI…GMLV, SLLC…TMAL, and IVLL…LVMV.

It belongs to the complex I subunit 4L family. Core subunit of respiratory chain NADH dehydrogenase (Complex I) which is composed of 45 different subunits.

The protein resides in the mitochondrion inner membrane. The catalysed reaction is a ubiquinone + NADH + 5 H(+)(in) = a ubiquinol + NAD(+) + 4 H(+)(out). Functionally, core subunit of the mitochondrial membrane respiratory chain NADH dehydrogenase (Complex I) which catalyzes electron transfer from NADH through the respiratory chain, using ubiquinone as an electron acceptor. Part of the enzyme membrane arm which is embedded in the lipid bilayer and involved in proton translocation. This is NADH-ubiquinone oxidoreductase chain 4L (MT-ND4L) from Orycteropus afer (Aardvark).